A 205-amino-acid chain; its full sequence is High frequency lysogenization protein HflD homolog (205 aa).

This sequence belongs to the HflD family.

Its subcellular location is the cytoplasm. The protein localises to the cell inner membrane. The polypeptide is High frequency lysogenization protein HflD homolog (Vibrio parahaemolyticus serotype O3:K6 (strain RIMD 2210633)).